A 328-amino-acid chain; its full sequence is D-cysteine desulfhydrase (328 aa).

Lys-51 is subject to N6-(pyridoxal phosphate)lysine.

Belongs to the ACC deaminase/D-cysteine desulfhydrase family. As to quaternary structure, homodimer. The cofactor is pyridoxal 5'-phosphate.

It carries out the reaction D-cysteine + H2O = hydrogen sulfide + pyruvate + NH4(+) + H(+). Its function is as follows. Catalyzes the alpha,beta-elimination reaction of D-cysteine and of several D-cysteine derivatives. It could be a defense mechanism against D-cysteine. This is D-cysteine desulfhydrase from Salmonella paratyphi A (strain AKU_12601).